The primary structure comprises 161 residues: Lipoprotein signal peptidase (161 aa).

Transmembrane regions (helical) follow at residues 6 to 26, 67 to 87, and 90 to 110; these read ILFL…KFYV, GLFF…YLIK, and VSDL…MGNL. Residues Asp-121 and Asp-139 contribute to the active site. A helical transmembrane segment spans residues 134 to 154; that stretch reads AFNIADTAISIGVLFLVVDMI.

The protein belongs to the peptidase A8 family.

Its subcellular location is the cell inner membrane. It catalyses the reaction Release of signal peptides from bacterial membrane prolipoproteins. Hydrolyzes -Xaa-Yaa-Zaa-|-(S,diacylglyceryl)Cys-, in which Xaa is hydrophobic (preferably Leu), and Yaa (Ala or Ser) and Zaa (Gly or Ala) have small, neutral side chains.. It participates in protein modification; lipoprotein biosynthesis (signal peptide cleavage). Its function is as follows. This protein specifically catalyzes the removal of signal peptides from prolipoproteins. This is Lipoprotein signal peptidase from Syntrophus aciditrophicus (strain SB).